The primary structure comprises 198 residues: Recombination protein RecR (198 aa).

The C4-type zinc finger occupies 58-73 (CSVCGNFTDTDPCAIC). One can recognise a Toprim domain in the interval 81-175 (DIICVVEQPK…KVTRIAAGIP (95 aa)).

It belongs to the RecR family.

Functionally, may play a role in DNA repair. It seems to be involved in an RecBC-independent recombinational process of DNA repair. It may act with RecF and RecO. This is Recombination protein RecR from Clostridium perfringens (strain ATCC 13124 / DSM 756 / JCM 1290 / NCIMB 6125 / NCTC 8237 / Type A).